A 116-amino-acid polypeptide reads, in one-letter code: Flagellar transcriptional regulator FlhD (116 aa).

The protein belongs to the FlhD family. As to quaternary structure, homodimer; disulfide-linked. Forms a heterohexamer composed of two FlhC and four FlhD subunits. Each FlhC binds a FlhD dimer, forming a heterotrimer, and a hexamer assembles by dimerization of two heterotrimers.

Its subcellular location is the cytoplasm. Functions in complex with FlhC as a master transcriptional regulator that regulates transcription of several flagellar and non-flagellar operons by binding to their promoter region. Activates expression of class 2 flagellar genes, including fliA, which is a flagellum-specific sigma factor that turns on the class 3 genes. Also regulates genes whose products function in a variety of physiological pathways. In Escherichia coli O157:H7, this protein is Flagellar transcriptional regulator FlhD.